The chain runs to 103 residues: Small ribosomal subunit protein uS10 (103 aa).

The protein belongs to the universal ribosomal protein uS10 family. As to quaternary structure, part of the 30S ribosomal subunit.

Its function is as follows. Involved in the binding of tRNA to the ribosomes. This chain is Small ribosomal subunit protein uS10, found in Desulfatibacillum aliphaticivorans.